The primary structure comprises 1773 residues: Disco-interacting protein 2 (1773 aa).

The region spanning 3–110 (HTASLPGYVR…QRHSKKIDFH (108 aa)) is the DMAP1-binding domain. 2 positions are modified to phosphotyrosine: Tyr60 and Tyr61. Disordered regions lie at residues 112–185 (QAAM…YHSE) and 198–319 (LKGR…PLSS). Polar residues-rich tracts occupy residues 113 to 125 (AAMS…QSGN) and 146 to 165 (YQNT…NNSQ). Positions 166–175 (HRQRRTQRKV) are enriched in basic residues. Positions 176-185 (THNEKRYHSE) are enriched in basic and acidic residues. The segment covering 224-236 (DELDSSTDDESIP) has biased composition (acidic residues). The span at 241–253 (SPDKEYNYPRDHI) shows a compositional bias: basic and acidic residues. The span at 272 to 297 (SMGSQQHARTDVKQNQITNQKYTAPN) shows a compositional bias: polar residues.

Belongs to the DIP2 family. Interacts with Disco. In terms of tissue distribution, expressed in the developing nervous system. Ubiquitously expressed in the developing brain. Within the mushroom body, a higher level is detected in the core of lobes and peduncle in the late third instar larva. Detected in whole mushroom body neuron structures at 48 hours after puparium formation and during later stages.

The protein localises to the cell membrane. Functionally, required for precise axonal bifurcation in mushroom body neurons by suppressing ectopic bifurcation and regulating the guidance of sister axons. May function by regulating expression of tdp1. Acts downstream of the serine/threonine-protein kinase Bsk to modulate the direction of axon projection. May play a role in fatty acid metabolism. The chain is Disco-interacting protein 2 from Drosophila melanogaster (Fruit fly).